We begin with the raw amino-acid sequence, 512 residues long: ATP synthase subunit alpha (512 aa).

ATP is bound at residue 169–176 (GDRQTGKT).

It belongs to the ATPase alpha/beta chains family. In terms of assembly, F-type ATPases have 2 components, CF(1) - the catalytic core - and CF(0) - the membrane proton channel. CF(1) has five subunits: alpha(3), beta(3), gamma(1), delta(1), epsilon(1). CF(0) has three main subunits: a(1), b(2) and c(9-12). The alpha and beta chains form an alternating ring which encloses part of the gamma chain. CF(1) is attached to CF(0) by a central stalk formed by the gamma and epsilon chains, while a peripheral stalk is formed by the delta and b chains.

The protein localises to the cell inner membrane. It catalyses the reaction ATP + H2O + 4 H(+)(in) = ADP + phosphate + 5 H(+)(out). In terms of biological role, produces ATP from ADP in the presence of a proton gradient across the membrane. The alpha chain is a regulatory subunit. This Dechloromonas aromatica (strain RCB) protein is ATP synthase subunit alpha.